Consider the following 381-residue polypeptide: 1-deoxy-D-xylulose 5-phosphate reductoisomerase (381 aa).

NADPH is bound by residues serine 10, glycine 11, serine 12, isoleucine 13, glycine 36, lysine 37, asparagine 38, and asparagine 121. Position 122 (lysine 122) interacts with 1-deoxy-D-xylulose 5-phosphate. Glutamate 123 lines the NADPH pocket. Aspartate 147 provides a ligand contact to Mn(2+). Positions 148, 149, 173, and 196 each coordinate 1-deoxy-D-xylulose 5-phosphate. Position 149 (glutamate 149) interacts with Mn(2+). Glycine 202 is an NADPH binding site. Serine 209, asparagine 214, lysine 215, and glutamate 218 together coordinate 1-deoxy-D-xylulose 5-phosphate. Glutamate 218 lines the Mn(2+) pocket.

This sequence belongs to the DXR family. It depends on Mg(2+) as a cofactor. Mn(2+) serves as cofactor.

The enzyme catalyses 2-C-methyl-D-erythritol 4-phosphate + NADP(+) = 1-deoxy-D-xylulose 5-phosphate + NADPH + H(+). It participates in isoprenoid biosynthesis; isopentenyl diphosphate biosynthesis via DXP pathway; isopentenyl diphosphate from 1-deoxy-D-xylulose 5-phosphate: step 1/6. In terms of biological role, catalyzes the NADPH-dependent rearrangement and reduction of 1-deoxy-D-xylulose-5-phosphate (DXP) to 2-C-methyl-D-erythritol 4-phosphate (MEP). The polypeptide is 1-deoxy-D-xylulose 5-phosphate reductoisomerase (Geobacillus sp. (strain WCH70)).